Consider the following 669-residue polypeptide: Armadillo repeat-containing protein gudu (669 aa).

Over residues 1 to 10 (MIGTSSGTSH) the composition is skewed to polar residues. A disordered region spans residues 1 to 53 (MIGTSSGTSHNRSRKKKEQCGSCPNRFSKDKRQVAAEDSDTTEVESSTDEEER). A compositionally biased stretch (acidic residues) spans 37 to 51 (EDSDTTEVESSTDEE). 10 ARM repeats span residues 100–139 (QINQ…DITL), 141–180 (IDIR…NVCK), 240–279 (KHNM…KCSS), 281–320 (PKFQ…KCAF), 322–365 (GTTR…MCAV), 367–406 (DANV…ECVR), 408–447 (QSNR…ECAE), 492–531 (DSAE…TIAQ), 574–613 (GNNT…KLSM), and 615–654 (PQNC…NIRE).

In terms of tissue distribution, highly expressed in testis.

In terms of biological role, important for spermatogenesis where it may have a role in sperm individualization. In Drosophila melanogaster (Fruit fly), this protein is Armadillo repeat-containing protein gudu.